The chain runs to 248 residues: MLKKIVIGVTATAAFGIGAGALAGGSVDQSYNNTSGAGFYVRGEAGYGLVDKKSGTSKVNFTGVTLTENSHTNTKKSRGFNGRVAIGYAFNPYFSLESGFTYYHPAYRDVNIAGSALPLFSSVQAEGRQKINLYSIDLMGKATLPIDNFYAFIEGGVAYVHTKFVAFTETGTAVSPLLPPVTSSVAVKVPSSSKGYIRPKAGIGVGYNITQNIGVDVSYSRVFGQGKINNTNYLPNLNAVTLGLTYKF.

Positions 1 to 23 (MLKKIVIGVTATAAFGIGAGALA) are cleaved as a signal peptide.

It is found in the cell outer membrane. This is an uncharacterized protein from Coxiella burnetii (strain RSA 493 / Nine Mile phase I).